Here is a 343-residue protein sequence, read N- to C-terminus: Phospholipid phosphatase-related protein type 2 (343 aa).

3 helical membrane passes run 12-32 (FSII…VILL), 69-89 (VPPA…ILLG), and 129-149 (FLGV…AGQV). N-linked (GlcNAc...) asparagine glycosylation occurs at Asn-165. A run of 3 helical transmembrane segments spans residues 210–230 (AALC…VFRV), 239–259 (SLCL…VAEY), and 266–286 (VLAG…CVVH). A disordered region spans residues 290-343 (SRPPSGRRLSPWEDLGQAPTMDSPLEKNPRSAGRIRHRHGSPHPSRRTAPAVAT). Phosphoserine is present on residues Ser-299 and Ser-312. Residues 322 to 335 (GRIRHRHGSPHPSR) show a composition bias toward basic residues.

This sequence belongs to the PA-phosphatase related phosphoesterase family.

The protein resides in the membrane. This chain is Phospholipid phosphatase-related protein type 2, found in Homo sapiens (Human).